The primary structure comprises 451 residues: Chromosomal replication initiator protein DnaA (451 aa).

The interval 1-71 (MSEKEIWDKV…QAIIYDVIGY (71 aa)) is domain I, interacts with DnaA modulators. Positions 71-112 (YEVKPHFISEDELASYNNVNTQEVQEPQVQHSSIDDKTWGKE) are domain II. The segment at 113–329 (QFNMHNTFDT…GALTRLLAYS (217 aa)) is domain III, AAA+ region. The ATP site is built by Gly-157, Gly-159, Lys-160, and Thr-161. The interval 330–451 (KLQGKPITTE…ENLEKEIRNQ (122 aa)) is domain IV, binds dsDNA.

It belongs to the DnaA family. Oligomerizes as a right-handed, spiral filament on DNA at oriC.

The protein resides in the cytoplasm. In terms of biological role, plays an essential role in the initiation and regulation of chromosomal replication. ATP-DnaA binds to the origin of replication (oriC) to initiate formation of the DNA replication initiation complex once per cell cycle. Binds the DnaA box (a 9 base pair repeat at the origin) and separates the double-stranded (ds)DNA. Forms a right-handed helical filament on oriC DNA; dsDNA binds to the exterior of the filament while single-stranded (ss)DNA is stabiized in the filament's interior. The ATP-DnaA-oriC complex binds and stabilizes one strand of the AT-rich DNA unwinding element (DUE), permitting loading of DNA polymerase. After initiation quickly degrades to an ADP-DnaA complex that is not apt for DNA replication. Binds acidic phospholipids. This Staphylococcus epidermidis (strain ATCC 35984 / DSM 28319 / BCRC 17069 / CCUG 31568 / BM 3577 / RP62A) protein is Chromosomal replication initiator protein DnaA.